Here is a 133-residue protein sequence, read N- to C-terminus: Transcription antitermination protein NusB (133 aa).

This sequence belongs to the NusB family.

Its function is as follows. Involved in transcription antitermination. Required for transcription of ribosomal RNA (rRNA) genes. Binds specifically to the boxA antiterminator sequence of the ribosomal RNA (rrn) operons. The protein is Transcription antitermination protein NusB of Pediococcus pentosaceus (strain ATCC 25745 / CCUG 21536 / LMG 10740 / 183-1w).